Here is a 346-residue protein sequence, read N- to C-terminus: Uroporphyrinogen decarboxylase (346 aa).

Substrate-binding positions include 26–30 (RQAGR), Asp76, Tyr153, Ser208, and His323.

The protein belongs to the uroporphyrinogen decarboxylase family. As to quaternary structure, homodimer.

The protein localises to the cytoplasm. It catalyses the reaction uroporphyrinogen III + 4 H(+) = coproporphyrinogen III + 4 CO2. It functions in the pathway porphyrin-containing compound metabolism; protoporphyrin-IX biosynthesis; coproporphyrinogen-III from 5-aminolevulinate: step 4/4. Functionally, catalyzes the decarboxylation of four acetate groups of uroporphyrinogen-III to yield coproporphyrinogen-III. The protein is Uroporphyrinogen decarboxylase of Prochlorococcus marinus (strain MIT 9215).